The primary structure comprises 306 residues: Serine/threonine-protein phosphatase PP2A-2 catalytic subunit (306 aa).

Residues Asp-54, His-56, Asp-82, and Asn-114 each coordinate Mn(2+). Residue His-115 is the Proton donor of the active site. His-164 and His-238 together coordinate Mn(2+). The residue at position 306 (Leu-306) is a Leucine methyl ester.

This sequence belongs to the PPP phosphatase family. PP-2A subfamily. In terms of assembly, PP2A consists of a common heterodimeric core enzyme, composed of a 36 kDa catalytic subunit (subunit C) and a 65 kDa constant regulatory subunit (subunit A), that associates with a variety of regulatory subunits such as subunits B (the R2/B/PR55/B55, R3/B''/PR72/PR130/PR59 and R5/B'/B56 families). Interacts with B'THETA. Interacts with HDA14. Interacts with SRK2E/OST1. Interacts with TAP46. The cofactor is Mn(2+). Reversibly methyl esterified on Leu-306 by leucine carboxyl methyltransferase 1 (LCMT1) and pectin methylesterase 1 (PME1). Carboxyl methylation influences the affinity of the catalytic subunit for the different regulatory subunits, thereby modulating the PP2A holoenzyme's substrate specificity, enzyme activity and cellular localization. Post-translationally, phosphorylation of either threonine (by autophosphorylation-activated protein kinase) or tyrosine results in inactivation of the phosphatase. Auto-dephosphorylation has been suggested as a mechanism for reactivation. In terms of tissue distribution, expressed in root meristem, emerging lateral roots, leaf vasculature, stipules, guard cells, anthers and pollen grains.

Its subcellular location is the cytoplasm. It localises to the cytosol. The protein resides in the nucleus. It is found in the peroxisome. It carries out the reaction O-phospho-L-seryl-[protein] + H2O = L-seryl-[protein] + phosphate. The enzyme catalyses O-phospho-L-threonyl-[protein] + H2O = L-threonyl-[protein] + phosphate. Its function is as follows. Dephosphorylates and activates the actin-depolymerizing factor ADF1, which, in turn, regulates actin cytoskeleton remodeling and is involved in the blue light photoreceptor PHOT2-mediated chloroplast avoidance movements. Associates with the serine/threonine-protein phosphatase PP2A regulatory subunits A and B' to positively regulates beta-oxidation of fatty acids and protoauxins in peroxisomes by dephosphorylating peroxisomal beta-oxidation-related proteins. Acts as a negative regulator of abscisic acid (ABA) signaling. May regulate ABA-dependent gene expression. Involved in the light-dependent activation of nitrate reductase. The protein is Serine/threonine-protein phosphatase PP2A-2 catalytic subunit of Arabidopsis thaliana (Mouse-ear cress).